The chain runs to 321 residues: MEWTQALIPIVSSCAMTIAAMPLFIGYFQMKKQGQAIREEGPKWHNVKAGTPTMGGLVFLVAAILTGIWVGRPWQNQSTPTLFILLFVLALYGVIGFLDDFIKIFKKRNMGLNSKQKLLGQIIGGIIFYLVYRSEGYPGTLNFFGIELPLGLFYGVFAIFWLVGFSNAVNLTDGIDGLVAGLGTISFATYGIIAWHQQQYDVLVICLSVLGGLLGFFAYNRKPAKIFMGDVGSLALGGLLAAISIMLNQEWTLLLVGLIYVMETASVMLQVTSFKLTGKRIFKMSPIHHHFGMCGWSEWKIDIIFWLVSIVTSLITLWFIW.

Helical transmembrane passes span 6 to 26 (ALIPIVSSCAMTIAAMPLFIG), 50 to 70 (GTPTMGGLVFLVAAILTGIWV), 82 to 102 (LFILLFVLALYGVIGFLDDFI), 118 to 138 (LLGQIIGGIIFYLVYRSEGYP), 143 to 163 (FFGIELPLGLFYGVFAIFWLV), 175 to 195 (IDGLVAGLGTISFATYGIIAW), 200 to 220 (YDVLVICLSVLGGLLGFFAYN), 226 to 246 (IFMGDVGSLALGGLLAAISIM), 251 to 271 (WTLLLVGLIYVMETASVMLQV), and 301 to 321 (IDIIFWLVSIVTSLITLWFIW).

The protein belongs to the glycosyltransferase 4 family. MraY subfamily. The cofactor is Mg(2+).

The protein localises to the cell membrane. It catalyses the reaction UDP-N-acetyl-alpha-D-muramoyl-L-alanyl-gamma-D-glutamyl-L-lysyl-D-alanyl-D-alanine + di-trans,octa-cis-undecaprenyl phosphate = Mur2Ac(oyl-L-Ala-gamma-D-Glu-L-Lys-D-Ala-D-Ala)-di-trans,octa-cis-undecaprenyl diphosphate + UMP. The protein operates within cell wall biogenesis; peptidoglycan biosynthesis. In terms of biological role, catalyzes the initial step of the lipid cycle reactions in the biosynthesis of the cell wall peptidoglycan: transfers peptidoglycan precursor phospho-MurNAc-pentapeptide from UDP-MurNAc-pentapeptide onto the lipid carrier undecaprenyl phosphate, yielding undecaprenyl-pyrophosphoryl-MurNAc-pentapeptide, known as lipid I. This Enterococcus hirae protein is Phospho-N-acetylmuramoyl-pentapeptide-transferase.